Reading from the N-terminus, the 82-residue chain is Putative defensin-like protein 134 (82 aa).

Residues 1 to 26 (MEVRSLNLCFLLVLVLLMSPAPTAVA) form the signal peptide. Disulfide bonds link Cys-32-Cys-79, Cys-42-Cys-68, Cys-47-Cys-74, and Cys-51-Cys-76.

Belongs to the DEFL family.

The protein resides in the secreted. The protein is Putative defensin-like protein 134 of Arabidopsis thaliana (Mouse-ear cress).